A 144-amino-acid polypeptide reads, in one-letter code: Large ribosomal subunit protein uL15 (144 aa).

The interval 1 to 52 (MRLNSLSPAEGAKHSAKRLGRGIGSGLGKTGGRGHKGQKSRTGGGVRRGFEG) is disordered. The segment covering 21-31 (RGIGSGLGKTG) has biased composition (gly residues).

Belongs to the universal ribosomal protein uL15 family. Part of the 50S ribosomal subunit.

Functionally, binds to the 23S rRNA. The protein is Large ribosomal subunit protein uL15 of Haemophilus ducreyi (strain 35000HP / ATCC 700724).